Reading from the N-terminus, the 253-residue chain is Octanoyltransferase (253 aa).

The BPL/LPL catalytic domain maps to 47 to 236 (PETPDQVWLV…ALCEVLAARE (190 aa)). Residues 87–94 (RGGQITYH), 159–161 (ALG), and 172–174 (GVS) each bind substrate. The active-site Acyl-thioester intermediate is cysteine 190.

Belongs to the LipB family.

The protein resides in the cytoplasm. It catalyses the reaction octanoyl-[ACP] + L-lysyl-[protein] = N(6)-octanoyl-L-lysyl-[protein] + holo-[ACP] + H(+). It functions in the pathway protein modification; protein lipoylation via endogenous pathway; protein N(6)-(lipoyl)lysine from octanoyl-[acyl-carrier-protein]: step 1/2. In terms of biological role, catalyzes the transfer of endogenously produced octanoic acid from octanoyl-acyl-carrier-protein onto the lipoyl domains of lipoate-dependent enzymes. Lipoyl-ACP can also act as a substrate although octanoyl-ACP is likely to be the physiological substrate. This is Octanoyltransferase from Cupriavidus pinatubonensis (strain JMP 134 / LMG 1197) (Cupriavidus necator (strain JMP 134)).